A 448-amino-acid chain; its full sequence is Trigger factor (448 aa).

The PPIase FKBP-type domain occupies 172–257; sequence GDRVTVDFVG…MKKIEWPHLP (86 aa).

Belongs to the FKBP-type PPIase family. Tig subfamily.

It is found in the cytoplasm. The catalysed reaction is [protein]-peptidylproline (omega=180) = [protein]-peptidylproline (omega=0). Its function is as follows. Involved in protein export. Acts as a chaperone by maintaining the newly synthesized protein in an open conformation. Functions as a peptidyl-prolyl cis-trans isomerase. The polypeptide is Trigger factor (Burkholderia lata (strain ATCC 17760 / DSM 23089 / LMG 22485 / NCIMB 9086 / R18194 / 383)).